A 615-amino-acid chain; its full sequence is Aldehyde oxidase GLOX1 (615 aa).

A signal peptide spans 1–25; it reads MKKSTRLLWLLSIIVLVAAVSKAVA. Asparagine 35 carries N-linked (GlcNAc...) asparagine glycosylation. The disordered stretch occupies residues 70 to 89; that stretch reads PPKAGKGKGKGKGRGTVAAG. Residues 72–82 show a composition bias toward basic residues; sequence KAGKGKGKGKG. N-linked (GlcNAc...) asparagine glycosylation is found at asparagine 187 and asparagine 297.

Its subcellular location is the secreted. The catalysed reaction is an aldehyde + O2 + H2O = a carboxylate + H2O2 + H(+). Functionally, catalyzes the oxidation of aldehydes to the corresponding carboxylate by coupling the reaction to the reduction of dioxygen to hydrogen peroxide. Substrates include glyoxal and other aldehydes. May be regulated by the transcription factor MYB80 during anther development and play a role in tapetum and pollen development. In Arabidopsis thaliana (Mouse-ear cress), this protein is Aldehyde oxidase GLOX1.